The chain runs to 156 residues: ATP synthase subunit b (156 aa).

A helical membrane pass occupies residues 11 to 31 (AIAFAVFVWFCMKYVWPPLLA).

It belongs to the ATPase B chain family. As to quaternary structure, F-type ATPases have 2 components, F(1) - the catalytic core - and F(0) - the membrane proton channel. F(1) has five subunits: alpha(3), beta(3), gamma(1), delta(1), epsilon(1). F(0) has three main subunits: a(1), b(2) and c(10-14). The alpha and beta chains form an alternating ring which encloses part of the gamma chain. F(1) is attached to F(0) by a central stalk formed by the gamma and epsilon chains, while a peripheral stalk is formed by the delta and b chains.

It localises to the cell inner membrane. Its function is as follows. F(1)F(0) ATP synthase produces ATP from ADP in the presence of a proton or sodium gradient. F-type ATPases consist of two structural domains, F(1) containing the extramembraneous catalytic core and F(0) containing the membrane proton channel, linked together by a central stalk and a peripheral stalk. During catalysis, ATP synthesis in the catalytic domain of F(1) is coupled via a rotary mechanism of the central stalk subunits to proton translocation. Functionally, component of the F(0) channel, it forms part of the peripheral stalk, linking F(1) to F(0). This is ATP synthase subunit b from Psychromonas ingrahamii (strain DSM 17664 / CCUG 51855 / 37).